The chain runs to 216 residues: Large ribosomal subunit protein uL3 (216 aa).

The tract at residues 132–157 is disordered; sequence FRGQGASHGTQAVHRKPGSIGGCATP.

The protein belongs to the universal ribosomal protein uL3 family. Part of the 50S ribosomal subunit. Forms a cluster with proteins L14 and L19.

One of the primary rRNA binding proteins, it binds directly near the 3'-end of the 23S rRNA, where it nucleates assembly of the 50S subunit. This chain is Large ribosomal subunit protein uL3, found in Saccharopolyspora erythraea (strain ATCC 11635 / DSM 40517 / JCM 4748 / NBRC 13426 / NCIMB 8594 / NRRL 2338).